Here is a 253-residue protein sequence, read N- to C-terminus: uncharacterized protein (253 aa).

The tract at residues 211–241 is disordered; that stretch reads TTRRKRYREDRDSGEDLGAESKRGNGSVRYT.

This is an uncharacterized protein from Ictalurid herpesvirus 1 (strain Auburn) (IcHV-1).